A 93-amino-acid chain; its full sequence is uncharacterized protein (93 aa).

The tract at residues 73–93 (KWTVSGPVKQDTGKTDPAEKN) is disordered. Over residues 83-93 (DTGKTDPAEKN) the composition is skewed to basic and acidic residues.

This is an uncharacterized protein from Rhodobacter capsulatus (Rhodopseudomonas capsulata).